A 176-amino-acid polypeptide reads, in one-letter code: Phosphopantetheine adenylyltransferase (176 aa).

S8 provides a ligand contact to substrate. ATP-binding positions include 8 to 9 (SF) and H16. 3 residues coordinate substrate: K40, T72, and R86. ATP-binding positions include 87 to 89 (GLR), E97, and 122 to 128 (YSFLSSS).

This sequence belongs to the bacterial CoaD family. In terms of assembly, homohexamer. Requires Mg(2+) as cofactor.

It localises to the cytoplasm. The enzyme catalyses (R)-4'-phosphopantetheine + ATP + H(+) = 3'-dephospho-CoA + diphosphate. It functions in the pathway cofactor biosynthesis; coenzyme A biosynthesis; CoA from (R)-pantothenate: step 4/5. In terms of biological role, reversibly transfers an adenylyl group from ATP to 4'-phosphopantetheine, yielding dephospho-CoA (dPCoA) and pyrophosphate. This Acaryochloris marina (strain MBIC 11017) protein is Phosphopantetheine adenylyltransferase.